A 344-amino-acid polypeptide reads, in one-letter code: Geranylgeranyl transferase type-2 subunit alpha (344 aa).

6 PFTA repeats span residues 44–78 (YSEG…NDVF), 89–123 (LLDN…NAPY), 125–159 (NWNY…QIER), 165–199 (LAKK…TILN), 214–248 (ILEQ…HCNP), and 266–293 (YLQK…SLVN).

It belongs to the protein prenyltransferase subunit alpha family. In terms of assembly, heterodimer of an alpha and a beta subunit.

The catalysed reaction is geranylgeranyl diphosphate + L-cysteinyl-[protein] = S-geranylgeranyl-L-cysteinyl-[protein] + diphosphate. Catalyzes the transfer of a geranyl-geranyl moiety from geranyl-geranyl pyrophosphate to proteins having the C-terminal-XCC or -XCXC, where both cysteines may become modified. In Schizosaccharomyces pombe (strain 972 / ATCC 24843) (Fission yeast), this protein is Geranylgeranyl transferase type-2 subunit alpha (bet4).